The chain runs to 175 residues: Co-chaperone protein HscB homolog (175 aa).

Positions 7–79 constitute a J domain; it reads SHFALFNLPE…LKRARYLLSL (73 aa).

This sequence belongs to the HscB family. In terms of assembly, interacts with HscA and stimulates its ATPase activity.

In terms of biological role, co-chaperone involved in the maturation of iron-sulfur cluster-containing proteins. Seems to help targeting proteins to be folded toward HscA. The protein is Co-chaperone protein HscB homolog of Paraburkholderia phymatum (strain DSM 17167 / CIP 108236 / LMG 21445 / STM815) (Burkholderia phymatum).